A 159-amino-acid polypeptide reads, in one-letter code: MTLEEVRGQDTVPESTARMQGAGKALHELLLSAQRQGCLTAGVYESAKVLNVDPDNVTFCVLAAGEEDEGDIALQIHFTLIQAFCCENDIDIVRVGDVQRLAAIVGAGEEAGAPGDLHCILISNPNEDAWKDPALEKLSLFCEESRSVNDWVPSITLPE.

Positions 43–86 (VYESAKVLNVDPDNVTFCVLAAGEEDEGDIALQIHFTLIQAFCC) are homodimerization.

It belongs to the GADD45 family. In terms of assembly, undergoes concentration-dependent homodimerization, which is required for growth inhibititory activity and enhances interaction with PCNA. Interacts with GADD45GIP1. Interacts with PCNA.

In terms of biological role, involved in the regulation of growth and apoptosis. Mediates activation of stress-responsive MTK1/MEKK4 MAPKKK. The protein is Growth arrest and DNA damage-inducible protein GADD45 gamma (GADD45G) of Homo sapiens (Human).